The primary structure comprises 434 residues: Enolase (434 aa).

Position 165 (Q165) interacts with (2R)-2-phosphoglycerate. Residue E207 is the Proton donor of the active site. Positions 244, 291, and 318 each coordinate Mg(2+). K343, R372, S373, and K394 together coordinate (2R)-2-phosphoglycerate. K343 (proton acceptor) is an active-site residue.

This sequence belongs to the enolase family. Mg(2+) is required as a cofactor.

It localises to the cytoplasm. Its subcellular location is the secreted. The protein localises to the cell surface. It carries out the reaction (2R)-2-phosphoglycerate = phosphoenolpyruvate + H2O. Its pathway is carbohydrate degradation; glycolysis; pyruvate from D-glyceraldehyde 3-phosphate: step 4/5. Its function is as follows. Catalyzes the reversible conversion of 2-phosphoglycerate (2-PG) into phosphoenolpyruvate (PEP). It is essential for the degradation of carbohydrates via glycolysis. This Macrococcus caseolyticus (strain JCSC5402) (Macrococcoides caseolyticum) protein is Enolase.